Here is a 498-residue protein sequence, read N- to C-terminus: Galactose-1-phosphate uridylyltransferase (498 aa).

The protein belongs to the galactose-1-phosphate uridylyltransferase type 2 family.

Its subcellular location is the cytoplasm. It catalyses the reaction alpha-D-galactose 1-phosphate + UDP-alpha-D-glucose = alpha-D-glucose 1-phosphate + UDP-alpha-D-galactose. It functions in the pathway carbohydrate metabolism; galactose metabolism. The polypeptide is Galactose-1-phosphate uridylyltransferase (Clostridium perfringens (strain SM101 / Type A)).